The sequence spans 272 residues: Orotidine 5'-phosphate decarboxylase (272 aa).

Residue K95 is the Proton donor of the active site.

The protein belongs to the OMP decarboxylase family. Type 2 subfamily.

The enzyme catalyses orotidine 5'-phosphate + H(+) = UMP + CO2. It functions in the pathway pyrimidine metabolism; UMP biosynthesis via de novo pathway; UMP from orotate: step 2/2. In Cupriavidus necator (strain ATCC 17699 / DSM 428 / KCTC 22496 / NCIMB 10442 / H16 / Stanier 337) (Ralstonia eutropha), this protein is Orotidine 5'-phosphate decarboxylase.